We begin with the raw amino-acid sequence, 265 residues long: Cell adhesion molecule CEACAM7 (265 aa).

An N-terminal signal peptide occupies residues 1–35 (MGSPSACPYRVCIPWQGLLLTASLLTFWNLPNSAQ). The 107-residue stretch at 36–142 (TNIDVVPFNV…EEVTRQFYVF (107 aa)) folds into the Ig-like V-type domain. Residues N57, N85, N105, N112, N174, N183, and N198 are each glycosylated (N-linked (GlcNAc...) asparagine). Residues 146 to 233 (PKPSITSNNF…ASRSDPVTLN (88 aa)) enclose the Ig-like C2-type domain. C168 and C216 are oxidised to a cystine. A lipid anchor (GPI-anchor amidated serine) is attached at S242. A propeptide spans 243–265 (SPDLSAGTAVSIMIGVLAGMALI) (removed in mature form).

It belongs to the immunoglobulin superfamily. CEA family. In terms of assembly, homodimer. Expressed in columnar epithelial cells of the colon (at protein level). Strongly down-regulated in colonic adenocarcinomas.

Its subcellular location is the cell membrane. The protein resides in the apical cell membrane. The sequence is that of Cell adhesion molecule CEACAM7 from Homo sapiens (Human).